A 3054-amino-acid polypeptide reads, in one-letter code: Genome polyprotein (3054 aa).

The Peptidase S30 domain occupies 163 to 304 (FLPATSLSNV…FAVCHSMTHY (142 aa)). Residues His-214, Asp-223, and Ser-256 each act as for P1 proteinase activity in the active site. The Involved in interaction with stylet and aphid transmission motif lies at 358–361 (KITC). The short motif at 615-617 (PTK) is the Involved in virions binding and aphid transmission element. The Peptidase C6 domain occupies 641–763 (MYIANEGYCY…ESEMKTYNVG (123 aa)). Catalysis depends on for helper component proteinase activity residues Cys-649 and His-722. The Helicase ATP-binding domain occupies 1234–1386 (EISHSPARDF…TQFPVKLKIE (153 aa)). 1247 to 1254 (GAVGSGKS) contacts ATP. The DECH box signature appears at 1336-1339 (DECH). The Helicase C-terminal domain occupies 1401 to 1564 (GANADVISCG…NLPVTTQSVS (164 aa)). The Nuclear localization signal signature appears at 1889–1896 (NKGKRKGT). Tyr-1911 carries the post-translational modification O-(5'-phospho-RNA)-tyrosine. Residues 2038–2255 (GESLFKGPRD…VLWGGHKVFM (218 aa)) enclose the Peptidase C4 domain. Residues His-2083, Asp-2118, and Cys-2188 each act as for nuclear inclusion protein A activity in the active site. One can recognise a RdRp catalytic domain in the interval 2521–2641 (WVYCDADGSQ…AIHPDKAERL (121 aa)). Residues 2798–2827 (GADAGKKKDQKDDKVAEQASKDRDVNAGTS) form a disordered region. Basic and acidic residues predominate over residues 2801-2822 (AGKKKDQKDDKVAEQASKDRDV). At Thr-3038 the chain carries Phosphothreonine.

Belongs to the potyviridae genome polyprotein family. Interacts with host eIF4E protein (via cap-binding region); this interaction mediates the translation of the VPg-viral RNA conjugates. Part of a complex that comprises VPg, RNA, host EIF4E and EIF4G; this interaction mediates the translation of the VPg-viral RNA conjugates. Interaction is possible in susceptible hosts but impaired in resistant plants: the VPg of strain HAT interacts with tomato eIF4E1 and eIF4E2 as well as with Capsicum annuum eIF4E1 susceptible alleles pvr2(+), pvr2(3) and pvr2(9) but not with the resistant allele pvr2(2), the VPg of strain CAA10 interacts with C.annuum eIF4E1 susceptible alleles pvr2(+), pvr2(2), pvr2(3) and pvr2(9), the VPg of strain NW interacts at least with C.annuum eIF4E1. In terms of assembly, homodimer; disulfide-linked. VPg is uridylylated by the polymerase and is covalently attached to the 5'-end of the genomic RNA. This uridylylated form acts as a nucleotide-peptide primer for the polymerase. Post-translationally, potyviral RNA is expressed as two polyproteins which undergo post-translational proteolytic processing. Genome polyprotein is processed by NIa-pro, P1 and HC-pro proteinases resulting in the production of at least ten individual proteins. P3N-PIPO polyprotein is cleaved by P1 and HC-pro proteinases resulting in the production of three individual proteins. The P1 proteinase and the HC-pro cleave only their respective C-termini autocatalytically. 6K1 is essential for proper proteolytic separation of P3 from CI.

Its subcellular location is the host cytoplasmic vesicle. The protein localises to the host nucleus. The protein resides in the virion. The enzyme catalyses RNA(n) + a ribonucleoside 5'-triphosphate = RNA(n+1) + diphosphate. The catalysed reaction is Hydrolyzes glutaminyl bonds, and activity is further restricted by preferences for the amino acids in P6 - P1' that vary with the species of potyvirus, e.g. Glu-Xaa-Xaa-Tyr-Xaa-Gln-|-(Ser or Gly) for the enzyme from tobacco etch virus. The natural substrate is the viral polyprotein, but other proteins and oligopeptides containing the appropriate consensus sequence are also cleaved.. It catalyses the reaction Hydrolyzes a Gly-|-Gly bond at its own C-terminus, commonly in the sequence -Tyr-Xaa-Val-Gly-|-Gly, in the processing of the potyviral polyprotein.. Functionally, required for aphid transmission and also has proteolytic activity. Only cleaves a Gly-Gly dipeptide at its own C-terminus. Interacts with virions and aphid stylets. Acts as a suppressor of RNA-mediated gene silencing, also known as post-transcriptional gene silencing (PTGS), a mechanism of plant viral defense that limits the accumulation of viral RNAs. May have RNA-binding activity. Its function is as follows. Has helicase activity. It may be involved in replication. In terms of biological role, indispensable for virus replication. Reduces the abundance of host transcripts related to jasmonic acid biosynthesis therefore altering the host defenses. In order to increase its own stability, decreases host protein degradation pathways. Indispensable for virus replication. Functionally, mediates the cap-independent, EIF4E-dependent translation of viral genomic RNAs. Binds to the cap-binding site of host EIF4E and thus interferes with the host EIF4E-dependent mRNA export and translation. VPg-RNA directly binds EIF4E and is a template for transcription. Also forms trimeric complexes with EIF4E-EIF4G, which are templates for translation. Its function is as follows. Has RNA-binding and proteolytic activities. In terms of biological role, an RNA-dependent RNA polymerase that plays an essential role in the virus replication. Involved in aphid transmission, cell-to-cell and systemis movement, encapsidation of the viral RNA and in the regulation of viral RNA amplification. The polypeptide is Genome polyprotein (Capsicum annuum (Capsicum pepper)).